The chain runs to 272 residues: NAD kinase (272 aa).

Residue Asp-50 is the Proton acceptor of the active site. Residues Asp-50–Gly-51, Asn-126–Glu-127, Arg-152, Asp-154, Thr-165–Ser-170, and Ala-189 contribute to the NAD(+) site.

It belongs to the NAD kinase family. A divalent metal cation serves as cofactor.

The protein resides in the cytoplasm. It carries out the reaction NAD(+) + ATP = ADP + NADP(+) + H(+). Its function is as follows. Involved in the regulation of the intracellular balance of NAD and NADP, and is a key enzyme in the biosynthesis of NADP. Catalyzes specifically the phosphorylation on 2'-hydroxyl of the adenosine moiety of NAD to yield NADP. The sequence is that of NAD kinase from Streptococcus pneumoniae serotype 19F (strain G54).